Reading from the N-terminus, the 634-residue chain is Transmembrane and coiled-coil domain-containing protein 4 (634 aa).

The stretch at 150–190 (EELDVLEEMFLESLKEIKEEESEMAEASRKKKENRRKWKRY) forms a coiled coil. 3 helical membrane-spanning segments follow: residues 203 to 223 (VIGV…ATII), 231 to 251 (LGSA…GAGL), and 346 to 366 (LSGI…ANVI). The segment at 542–612 (EPRQAAAAAS…ERPPICSHGM (71 aa)) is disordered. The span at 552–583 (SGETPHQVGQTQGPISGDTSKLAMSTDPSQAQ) shows a compositional bias: polar residues.

This sequence belongs to the TMCO4 family.

It is found in the membrane. The polypeptide is Transmembrane and coiled-coil domain-containing protein 4 (TMCO4) (Homo sapiens (Human)).